The chain runs to 366 residues: Cobalt-precorrin-5B C(1)-methyltransferase (366 aa).

This sequence belongs to the CbiD family.

The catalysed reaction is Co-precorrin-5B + S-adenosyl-L-methionine = Co-precorrin-6A + S-adenosyl-L-homocysteine. It functions in the pathway cofactor biosynthesis; adenosylcobalamin biosynthesis; cob(II)yrinate a,c-diamide from sirohydrochlorin (anaerobic route): step 6/10. Functionally, catalyzes the methylation of C-1 in cobalt-precorrin-5B to form cobalt-precorrin-6A. This Thermus thermophilus (strain ATCC BAA-163 / DSM 7039 / HB27) protein is Cobalt-precorrin-5B C(1)-methyltransferase.